The chain runs to 91 residues: Potassium channel toxin TtrKIK (91 aa).

Positions 1–25 (MVATNRCCVFALLFALLLVHSLTEA) are cleaved as a signal peptide. The propeptide occupies 26–44 (GKGKEVLGKIKDKLIEAKD). A BetaSPN-type CS-alpha/beta domain is found at 58–91 (EYACPAIEKFCEDHCAAKKAVGKCDDFKCNCIKL). 3 cysteine pairs are disulfide-bonded: Cys61–Cys81, Cys68–Cys86, and Cys72–Cys88.

The protein belongs to the long chain scorpion toxin family. Class 2 subfamily. Expressed by the venom gland.

It localises to the secreted. Functionally, the full peptide presents antibacterial and cytotoxic activities. The synthetic C-terminus (AA 33-76) inhibits voltage-gated potassium channels Kv1.1/KCNA1, Kv1.2/KCNA2, and Kv1.3/KCNA3. The polypeptide is Potassium channel toxin TtrKIK (Tityus trivittatus (Argentinean scorpion)).